The sequence spans 243 residues: tRNA pseudouridine synthase A (243 aa).

The Nucleophile role is filled by aspartate 53. Substrate is bound at residue tyrosine 111.

Belongs to the tRNA pseudouridine synthase TruA family. Homodimer.

The enzyme catalyses uridine(38/39/40) in tRNA = pseudouridine(38/39/40) in tRNA. Its function is as follows. Formation of pseudouridine at positions 38, 39 and 40 in the anticodon stem and loop of transfer RNAs. The chain is tRNA pseudouridine synthase A from Chlorobium limicola (strain DSM 245 / NBRC 103803 / 6330).